The following is a 338-amino-acid chain: Glycerol-3-phosphate dehydrogenase [NAD(P)+] (338 aa).

Ser-15, Tyr-16, His-36, and Lys-110 together coordinate NADPH. Sn-glycerol 3-phosphate contacts are provided by Lys-110, Gly-139, and Thr-141. Ala-143 serves as a coordination point for NADPH. Sn-glycerol 3-phosphate contacts are provided by Lys-195, Asp-248, Ser-258, Arg-259, and Asn-260. The active-site Proton acceptor is the Lys-195. Arg-259 contributes to the NADPH binding site. Val-283 and Glu-285 together coordinate NADPH.

Belongs to the NAD-dependent glycerol-3-phosphate dehydrogenase family.

It localises to the cytoplasm. It carries out the reaction sn-glycerol 3-phosphate + NAD(+) = dihydroxyacetone phosphate + NADH + H(+). It catalyses the reaction sn-glycerol 3-phosphate + NADP(+) = dihydroxyacetone phosphate + NADPH + H(+). It participates in membrane lipid metabolism; glycerophospholipid metabolism. In terms of biological role, catalyzes the reduction of the glycolytic intermediate dihydroxyacetone phosphate (DHAP) to sn-glycerol 3-phosphate (G3P), the key precursor for phospholipid synthesis. In Edwardsiella ictaluri (strain 93-146), this protein is Glycerol-3-phosphate dehydrogenase [NAD(P)+].